The following is a 331-amino-acid chain: Pyrimidine monooxygenase RutA (331 aa).

FMN is bound by residues 79–80 (IK), Asn145, Glu154, 170–171 (RY), and Ser220. Residues 300 to 331 (WLTEQSQKDTRSGTDTNVRQMADPTSASAFNH) are disordered. Residues 312–331 (GTDTNVRQMADPTSASAFNH) are compositionally biased toward polar residues.

It belongs to the NtaA/SnaA/DszA monooxygenase family. RutA subfamily.

The catalysed reaction is uracil + FMNH2 + NADH + O2 = (Z)-3-ureidoacrylate + FMN + NAD(+) + H2O + H(+). It carries out the reaction thymine + FMNH2 + NADH + O2 = (Z)-2-methylureidoacrylate + FMN + NAD(+) + H2O + H(+). Functionally, catalyzes the pyrimidine ring opening between N-3 and C-4 by an unusual flavin hydroperoxide-catalyzed mechanism, adding oxygen atoms in the process to yield ureidoacrylate peracid, that immediately reacts with FMN forming ureidoacrylate and FMN-N(5)-oxide. The FMN-N(5)-oxide reacts spontaneously with NADH to produce FMN. Requires the flavin reductase RutF to regenerate FMN in vivo. This is Pyrimidine monooxygenase RutA from Escherichia coli O7:K1 (strain IAI39 / ExPEC).